Consider the following 86-residue polypeptide: Putative protein adenylyltransferase MJ1215 (86 aa).

Residues 35–49 (GSYARGEQKETSDID) carry the GSX(10)DXD motif motif. Residues Asp-47, Asp-49, and Asp-79 each contribute to the Mg(2+) site.

The protein belongs to the MntA antitoxin family. In terms of assembly, probably forms a complex with cognate toxin MJ1216. Requires Mg(2+) as cofactor.

The catalysed reaction is L-tyrosyl-[protein] + ATP = O-(5'-adenylyl)-L-tyrosyl-[protein] + diphosphate. The enzyme catalyses O-(5'-adenylyl)-L-tyrosyl-[protein] + ATP = O-[5'-(adenylyl-(5'-&gt;3')-adenylyl)]-L-tyrosyl-[protein] + diphosphate. Functionally, probable antitoxin component of a putative type VII toxin-antitoxin (TA) system. Neutralizes cognate toxic MJ1216 by di-AMPylation. This chain is Putative protein adenylyltransferase MJ1215, found in Methanocaldococcus jannaschii (strain ATCC 43067 / DSM 2661 / JAL-1 / JCM 10045 / NBRC 100440) (Methanococcus jannaschii).